A 293-amino-acid polypeptide reads, in one-letter code: AM-toxin biosynthesis protein 14 (293 aa).

Transmembrane regions (helical) follow at residues 33–53 (SATA…EVYI), 73–93 (IAVN…ALVL), 148–168 (GVLA…LCVW), 183–203 (LVPI…LWIL), and 221–241 (VWCL…TPLT).

The protein resides in the membrane. Its pathway is mycotoxin biosynthesis. Its function is as follows. Part of the gene clusters that mediate the biosynthesis of AM-toxins, host-selective toxins (HSTs) causing Alternaria blotch on apple, a worldwide distributed disease. AM-toxins are cyclic depsipeptides containing the 3 residues 2-hydroxy-isovaleric acid (2-HIV), dehydroalanine, L-alanine which are common for all 3 AM-toxins I to III. The fourth precursor is L-alpha-amino-methoxyphenyl-valeric acid (L-Amv) for AM-toxin I, L-alpha-amino-phenyl-valeric acid (L-Apv) for AM-toxin II, and L-alpha-amino-hydroxyphenyl-valeric acid (L-Ahv) for AM-toxin III. AM-toxins have two target sites for affecting susceptible apple cells; they cause invagination of the plasma membrane and electrolyte loss and chloroplast disorganization. The non-ribosomal peptide synthetase AMT1 contains 4 catalytic modules and is responsible for activation of each residue in AM-toxin. The aldo-keto reductase AMT2 catalyzes the conversion of 2-keto-isovaleric acid (2-KIV) to 2-hydroxy-isovaleric acid (2-HIV), one of the precursor residues incorporated by AMT1 during AM-toxin biosynthesis, by reduction of its ketone to an alcohol. The cytochrome P450 monooxygenase AMT3 and the thioesterase AMT4 are also important for AM-toxin production, but their exact function within the AM-toxin biosynthesis are not known yet. Up to 21 proteins (including AMT1 to AMT4) are predicted to be involved in AM-toxin biosynthesis since their expression ishighly up-regulated in AM-toxin-producing cultures. The protein is AM-toxin biosynthesis protein 14 of Alternaria alternata (Alternaria rot fungus).